We begin with the raw amino-acid sequence, 452 residues long: Mitochondrial import inner membrane translocase subunit TIM50 (452 aa).

The transit peptide at 1–23 directs the protein to the mitochondrion; the sequence is MSLSKLTQTCFSRHQAKTFIRLY. The Mitochondrial matrix segment spans residues 24–167; the sequence is SSDFKSLLGP…RRKRMERNTR (144 aa). Disordered stretches follow at residues 96 to 115 and 130 to 153; these read IEAEKVLSSPPPAPAPTSSA and ESAASKSSSSSGGSSDNSDPGNAE. Low complexity predominate over residues 131–144; it reads SAASKSSSSSGGSS. A helical transmembrane segment spans residues 168 to 188; the sequence is IGAYVLFGGSIIGFISFCFYY. Residues 189–452 are Mitochondrial intermembrane-facing; that stretch reads GRAQRDEFGN…LFGSRRHVNA (264 aa). The 145-residue stretch at 243–387 folds into the FCP1 homology domain; it reads YLQPKYTIVI…VDLAELLKTI (145 aa).

Belongs to the TIM50 family.

The protein resides in the mitochondrion inner membrane. Essential component of the TIM23 complex, a complex that mediates the translocation of transit peptide-containing proteins across the mitochondrial inner membrane. The chain is Mitochondrial import inner membrane translocase subunit TIM50 (scpl-4) from Caenorhabditis elegans.